We begin with the raw amino-acid sequence, 390 residues long: DNA primase small subunit PriS (390 aa).

Catalysis depends on residues D98, D100, and D296.

This sequence belongs to the eukaryotic-type primase small subunit family. In terms of assembly, heterodimer of a small subunit (PriS) and a large subunit (PriL). Requires Mg(2+) as cofactor. Mn(2+) is required as a cofactor.

Functionally, catalytic subunit of DNA primase, an RNA polymerase that catalyzes the synthesis of short RNA molecules used as primers for DNA polymerase during DNA replication. The small subunit contains the primase catalytic core and has DNA synthesis activity on its own. Binding to the large subunit stabilizes and modulates the activity, increasing the rate of DNA synthesis while decreasing the length of the DNA fragments, and conferring RNA synthesis capability. The DNA polymerase activity may enable DNA primase to also catalyze primer extension after primer synthesis. May also play a role in DNA repair. The polypeptide is DNA primase small subunit PriS (Methanococcoides burtonii (strain DSM 6242 / NBRC 107633 / OCM 468 / ACE-M)).